The following is a 211-amino-acid chain: ATP-dependent Clp protease proteolytic subunit 2 (211 aa).

The active-site Nucleophile is the serine 106. Histidine 131 is a catalytic residue.

Belongs to the peptidase S14 family. Fourteen ClpP subunits assemble into 2 heptameric rings which stack back to back to give a disk-like structure with a central cavity, resembling the structure of eukaryotic proteasomes.

It is found in the cytoplasm. The enzyme catalyses Hydrolysis of proteins to small peptides in the presence of ATP and magnesium. alpha-casein is the usual test substrate. In the absence of ATP, only oligopeptides shorter than five residues are hydrolyzed (such as succinyl-Leu-Tyr-|-NHMec, and Leu-Tyr-Leu-|-Tyr-Trp, in which cleavage of the -Tyr-|-Leu- and -Tyr-|-Trp bonds also occurs).. Functionally, cleaves peptides in various proteins in a process that requires ATP hydrolysis. Has a chymotrypsin-like activity. Plays a major role in the degradation of misfolded proteins. The sequence is that of ATP-dependent Clp protease proteolytic subunit 2 from Bradyrhizobium diazoefficiens (strain JCM 10833 / BCRC 13528 / IAM 13628 / NBRC 14792 / USDA 110).